The sequence spans 1011 residues: Retinoblastoma-related protein (1011 aa).

The segment at 1–22 (MSQASVDMEDVKPSISLPSDDG) is disordered. A domain A region spans residues 411–612 (TPVSTAMTTA…ERGSSMYNSL (202 aa)). Residues 411–860 (TPVSTAMTTA…NEVFIPSVKP (450 aa)) are pocket. The tract at residues 613–729 (IVARPTLAAE…PAGGGETCAE (117 aa)) is spacer. The segment at 730-860 (TGINIFFNKI…NEVFIPSVKP (131 aa)) is domain B. The disordered stretch occupies residues 872 to 903 (QKSKSSPEDSNNADSQIPGSPRLSPFPNLPDM). The span at 873 to 889 (KSKSSPEDSNNADSQIP) shows a compositional bias: polar residues.

This sequence belongs to the retinoblastoma protein (RB) family.

The protein resides in the nucleus. Regulator of biological processes that recruits a histone deacetylase to control gene transcription. May play a role in the entry into mitosis, negatively regulating the cell proliferation. Formation of stable complexes with geminiviridae replication-associated proteins may create a cellular environment which favors viral DNA replication. The chain is Retinoblastoma-related protein (Rb1) from Cocos nucifera (Coconut palm).